The sequence spans 399 residues: Glutathione S-transferase LANCL1 (399 aa).

A2 is subject to N-acetylalanine. K142 is subject to N6-acetyllysine. Position 276 (C276) interacts with Zn(2+). Residue K317 participates in glutathione binding. Zn(2+) is bound by residues C322 and H323. 364–367 contributes to the glutathione binding site; that stretch reads RTPD.

This sequence belongs to the LanC-like protein family. In terms of assembly, interacts with the C-terminal of STOM. Interacts with the EPS8 SH3 domain. Interaction with EPS8 is inhibited by glutathione binding. As to quaternary structure, (Microbial infection) Interacts with P.falciparum SBP1. In terms of tissue distribution, detected in erythrocytes, brain, kidney, testis, ovary, heart, lung, placenta and spleen (at protein level). Ubiquitous. Strongly expressed in brain, spinal cord, pituitary gland, kidney, heart, skeletal muscle, pancreas, ovary and testis.

It localises to the cytoplasm. It is found in the cell membrane. It catalyses the reaction RX + glutathione = an S-substituted glutathione + a halide anion + H(+). The catalysed reaction is 1-chloro-2,4-dinitrobenzene + glutathione = 2,4-dinitrophenyl-S-glutathione + chloride + H(+). In terms of biological role, functions as a glutathione transferase. Catalyzes conjugation of the glutathione (GSH) to artificial substrates 1-chloro-2,4-dinitrobenzene (CDNB) and p-nitrophenyl acetate. Mitigates neuronal oxidative stress during normal postnatal development and in response to oxidative stresses probably through GSH antioxidant defense mechanism. May play a role in EPS8 signaling. Binds glutathione. The polypeptide is Glutathione S-transferase LANCL1 (Homo sapiens (Human)).